We begin with the raw amino-acid sequence, 372 residues long: Steroid C26-monooxygenase (372 aa).

Position 314 (cysteine 314) interacts with heme.

The protein belongs to the cytochrome P450 family. Heme serves as cofactor.

It catalyses the reaction cholest-4-en-3-one + 6 reduced [2Fe-2S]-[ferredoxin] + 3 O2 + 5 H(+) = (25R)-3-oxocholest-4-en-26-oate + 6 oxidized [2Fe-2S]-[ferredoxin] + 4 H2O. The protein operates within steroid metabolism; cholesterol degradation. Involved in the utilization of cholesterol as the sole carbon and energy source by degrading the side chain during infection. Primarily catalyzes the sequential oxidation of the terminal methyl of cholest-4-en-3-one into (25R)-26-hydroxycholest-4-en-3-one (alcohol), (25R)-26-oxocholest-4-en-3-one (aldehyde), to finally yield the carboxylic acid (25R)-3-oxocholest-4-en-26-oate. Also able to sequentially oxidize cholesterol itself, not only cholest-4-en-3-one. The polypeptide is Steroid C26-monooxygenase (cyp142) (Mycobacterium tuberculosis (strain CDC 1551 / Oshkosh)).